Here is a 671-residue protein sequence, read N- to C-terminus: Preterminal protein (671 aa).

Positions 380–389 (RLPVRRRRRR) match the Nuclear localization signal motif. Positions 386–411 (RRRRVPPPPPPPEEEEGEALMEEEIE) are disordered. A compositionally biased stretch (acidic residues) spans 397-411 (PEEEEGEALMEEEIE). O-(5'-phospho-DNA)-serine is present on Ser-580. Residues 645–671 (GADVPLPPLPAGPEPPLPPGARPRHRF) are disordered. Positions 649–665 (PLPPLPAGPEPPLPPGA) are enriched in pro residues.

This sequence belongs to the adenoviridae terminal protein family. As to quaternary structure, heterodimer with the polymerase; this heterodimer binds to bp 9 to 18 of the genome. Interacts with host POU2F1; POU2F1 binds to the auxiliary sequences in the inverted terminal repeats and tethers the pTP-POL heterodimer to the origin DNA thereby participating in the assembly of the pre-initiation complex (POL-TP-DBP-NFIA-POU2F1). In terms of processing, preterminal protein is used to replicate viral genome, upon genomic encapsidation it is processed first into iTP and finally into TP by adenovirus protease.

It localises to the host nucleus matrix. Its function is as follows. Protein covalently bound to the viral DNA that acts as a primer for viral genomic replication by DNA strand displacement. Assembles on the viral origin of replication in an initiation complex with viral polymerase, DBP, host NFIA and host POU2F1/OCT1. During initiation, the polymerase covalently couples the first dCTP with Ser-580 of pTP. The terminal protein stimulates the template activity over 20 fold compared to protein-free templates. Neo-synthesized viral genomes are linked to two preterminal proteins, one for each 5' end. These new genomes are encapsidated in the nucleus, and during capsid maturation by viral protease, preterminal protein is first cleaved into intermediary (iTP), then into mature TP. May play a role in host nuclear matrix localization of genomic DNA. This Human adenovirus C serotype 5 (HAdV-5) protein is Preterminal protein.